The primary structure comprises 568 residues: 2-isopropylmalate synthase (568 aa).

The Pyruvate carboxyltransferase domain occupies proline 37–aspartate 313. Mg(2+) contacts are provided by aspartate 46, histidine 252, histidine 254, and asparagine 288. Residues glutamate 455–serine 568 are regulatory domain.

It belongs to the alpha-IPM synthase/homocitrate synthase family. LeuA type 2 subfamily. As to quaternary structure, homodimer. The cofactor is Mg(2+).

The protein resides in the cytoplasm. It carries out the reaction 3-methyl-2-oxobutanoate + acetyl-CoA + H2O = (2S)-2-isopropylmalate + CoA + H(+). It functions in the pathway amino-acid biosynthesis; L-leucine biosynthesis; L-leucine from 3-methyl-2-oxobutanoate: step 1/4. In terms of biological role, catalyzes the condensation of the acetyl group of acetyl-CoA with 3-methyl-2-oxobutanoate (2-ketoisovalerate) to form 3-carboxy-3-hydroxy-4-methylpentanoate (2-isopropylmalate). This Thermobifida fusca (strain YX) protein is 2-isopropylmalate synthase.